A 331-amino-acid chain; its full sequence is Methionyl-tRNA formyltransferase (331 aa).

110-113 (SLLP) is a (6S)-5,6,7,8-tetrahydrofolate binding site. Residues 312–331 (HAPAERVSAAGSPAGAGGAP) form a disordered region.

It belongs to the Fmt family.

It catalyses the reaction L-methionyl-tRNA(fMet) + (6R)-10-formyltetrahydrofolate = N-formyl-L-methionyl-tRNA(fMet) + (6S)-5,6,7,8-tetrahydrofolate + H(+). Attaches a formyl group to the free amino group of methionyl-tRNA(fMet). The formyl group appears to play a dual role in the initiator identity of N-formylmethionyl-tRNA by promoting its recognition by IF2 and preventing the misappropriation of this tRNA by the elongation apparatus. The protein is Methionyl-tRNA formyltransferase of Frankia alni (strain DSM 45986 / CECT 9034 / ACN14a).